Reading from the N-terminus, the 60-residue chain is Large ribosomal subunit protein bL33 (60 aa).

It belongs to the bacterial ribosomal protein bL33 family.

The sequence is that of Large ribosomal subunit protein bL33 from Chlorobium phaeovibrioides (strain DSM 265 / 1930) (Prosthecochloris vibrioformis (strain DSM 265)).